Consider the following 325-residue polypeptide: ATP phosphoribosyltransferase (325 aa).

It belongs to the ATP phosphoribosyltransferase family. Long subfamily. Mg(2+) is required as a cofactor.

The protein localises to the cytoplasm. The catalysed reaction is 1-(5-phospho-beta-D-ribosyl)-ATP + diphosphate = 5-phospho-alpha-D-ribose 1-diphosphate + ATP. Its pathway is amino-acid biosynthesis; L-histidine biosynthesis; L-histidine from 5-phospho-alpha-D-ribose 1-diphosphate: step 1/9. Its activity is regulated as follows. Feedback inhibited by histidine. Its function is as follows. Catalyzes the condensation of ATP and 5-phosphoribose 1-diphosphate to form N'-(5'-phosphoribosyl)-ATP (PR-ATP). Has a crucial role in the pathway because the rate of histidine biosynthesis seems to be controlled primarily by regulation of HisG enzymatic activity. This chain is ATP phosphoribosyltransferase, found in Bradyrhizobium diazoefficiens (strain JCM 10833 / BCRC 13528 / IAM 13628 / NBRC 14792 / USDA 110).